The chain runs to 738 residues: MSTQFRKSNHNSHSSKKLNPALKSKIDTLTELFPDWTSDDLIDIVQEYDDLETIIDKITSGAVTRWDEVKKPAKKEKYEKKEQQHSYVPQQHLPNPEDDITYKSSNNSNSFTSTKHNSSNNYTQARNKKKVQTPRAHTTGKHVNLDKGKHVPSKPVSNTTSWAAAVSVDTKHDVPQDSNDNNNEELEAQGQQAQEKNQEKEQEEQQQQEGHNNKEEHKQIEQPSLSSKKTTSRTSASQPKKMSWAAIATPKPKAVKKTESPLENVAELKKEISDIKKDDQKSEASEEKVNEQETSAQEQEEETAEPSEENEDRVPEVDGEEVQEEAEEKEQVKEEEQTAEELEQEQDNVAAPEEEVTVVEEKVEISAVISEPPEDQANTVPQPQQQSQQPQQPQQPQQPQQPQQPQQQQQPQQPQQPQQQLQQQQQQQQQPVQAQAQAQEEQLSQNYYTQQQQQQYAQQQHQLQQQYLSQQQQYAQQQQQHPQPQSQQPQSQQSPQSQKQGNNVAAQQYYMYQNQFPGYSYPGMFDSQGYAYGQQYQQLAQNNAQTSGNANQYNFQQGYGQAGANTAAANLTSAAAAAAASPATAHAQPQQQQPYGGSFMPYYAHFYQQSFPYGQPQYGVAGQYPYQLPKNNYNYYQTQNGQEQQSPNQGVAQHSEDSQQKQSQQQQQQQPQGQPQPEVQMQNGQPVNPQQQMQFQQYYQFQQQQQQAAAAAAAAAQQGVPYGYNGYDYNSKNSRGFY.

Positions 21–63 constitute a CUE domain; sequence ALKSKIDTLTELFPDWTSDDLIDIVQEYDDLETIIDKITSGAV. Over residues 69–84 the composition is skewed to basic and acidic residues; sequence VKKPAKKEKYEKKEQQ. 3 disordered regions span residues 69-455, 467-503, and 640-688; these read VKKP…QQQQ, YLSQ…QGNN, and NGQE…QPVN. The span at 103-121 shows a compositional bias: low complexity; the sequence is KSSNNSNSFTSTKHNSSNN. Positions 211 to 220 are enriched in basic and acidic residues; sequence HNNKEEHKQI. Low complexity predominate over residues 224–237; it reads SLSSKKTTSRTSAS. The segment covering 256–291 has biased composition (basic and acidic residues); sequence KKTESPLENVAELKKEISDIKKDDQKSEASEEKVNE. Ser260, Ser273, and Ser307 each carry phosphoserine. Acidic residues-rich tracts occupy residues 298 to 328 and 337 to 358; these read EQEE…EAEE and QTAE…EVTV. Thr338 bears the Phosphothreonine mark. 2 stretches are compositionally biased toward low complexity: residues 380–455 and 467–498; these read VPQP…QQQQ and YLSQ…PQSQ. The contains the proteolytic activation cleavage site stretch occupies residues 500-530; the sequence is QGNNVAAQQYYMYQNQFPGYSYPGMFDSQGY. The residue at position 646 (Ser646) is a Phosphoserine. Positions 660–688 are enriched in low complexity; it reads QKQSQQQQQQQPQGQPQPEVQMQNGQPVN.

This sequence belongs to the DEF1 family. Homodimer; may form higher order oligomers. Interacts with the large RNA polymerase II subunit RPO21; the interaction is direct and serves to bridge RPO21 to the Elongin complex in a manner dependent on transcription stress. Interacts with RAD26. Post-translationally, ubiquitinated. In terms of processing, proteolytically cleaved by the proteasome in response to transcription stress; the resulting N-terminal form constitutes the activated nuclear form and the C-terminal portion is degraded.

It is found in the cytoplasm. Its subcellular location is the nucleus. The protein resides in the chromosome. It localises to the telomere. Recruits the ubiquitination machinery to RNA polymerase II for polyubiquitination, removal and degradation, when the transcription-coupled repair (TCR) factor RAD26 fails to efficiently displace stalled RNA polymerase II. Also involved in telomere length regulation. Binds DNA. The polypeptide is RNA polymerase II degradation factor 1 (DEF1) (Saccharomyces cerevisiae (strain JAY291) (Baker's yeast)).